We begin with the raw amino-acid sequence, 657 residues long: N-acetylgalactosaminyltransferase 7 (657 aa).

Residues M1 to G6 lie on the Cytoplasmic side of the membrane. A helical; Signal-anchor for type II membrane protein transmembrane segment spans residues F7–S29. 2 disordered regions span residues S30–F66 and E83–R105. The Lumenal segment spans residues S30 to V657. Disulfide bonds link C197–C435, C426–C507, C545–C562, C585–C600, and C625–C640. The interval L206–P317 is catalytic subdomain A. Substrate-binding residues include D247 and R277. Positions 301 and 303 each coordinate Mn(2+). The tract at residues P381 to R443 is catalytic subdomain B. Substrate is bound at residue W412. A Mn(2+)-binding site is contributed by H440. R443 is a binding site for substrate. Residues V532–N652 enclose the Ricin B-type lectin domain.

The protein belongs to the glycosyltransferase 2 family. GalNAc-T subfamily. The cofactor is Mn(2+). Highly expressed in sublingual gland. Expressed at lower level in stomach, small intestiine and colon.

Its subcellular location is the golgi apparatus membrane. The enzyme catalyses L-seryl-[protein] + UDP-N-acetyl-alpha-D-galactosamine = a 3-O-[N-acetyl-alpha-D-galactosaminyl]-L-seryl-[protein] + UDP + H(+). It carries out the reaction L-threonyl-[protein] + UDP-N-acetyl-alpha-D-galactosamine = a 3-O-[N-acetyl-alpha-D-galactosaminyl]-L-threonyl-[protein] + UDP + H(+). It functions in the pathway protein modification; protein glycosylation. Glycopeptide transferase involved in O-linked oligosaccharide biosynthesis, which catalyzes the transfer of an N-acetyl-D-galactosamine residue to an already glycosylated peptide. In contrast to other proteins of the family, it does not act as a peptide transferase that transfers GalNAc onto serine or threonine residue on the protein receptor, but instead requires the prior addition of a GalNAc on a peptide before adding additional GalNAc moieties. Some peptide transferase activity is however not excluded, considering that its appropriate peptide substrate may remain unidentified. The chain is N-acetylgalactosaminyltransferase 7 (Galnt7) from Mus musculus (Mouse).